The chain runs to 62 residues: Potassium channel toxin kappa-KTx 3.3 (62 aa).

Residues 1–26 (MKSTLMTASLLILVLLSIVDYASVYA) form the signal peptide. Residues 27 to 36 (ELIDSEISME) constitute a propeptide that is removed on maturation. 2 cysteine pairs are disulfide-bonded: Cys-43-Cys-61 and Cys-47-Cys-57.

The protein belongs to the short scorpion toxin superfamily. Potassium channel inhibitor kappa-KTx family. Kappa-KTx 3 subfamily. As to expression, expressed by the venom gland.

Its subcellular location is the secreted. Its function is as follows. Potassium channel inhibitor (Kv). In Heterometrus petersii (Asian forest scorpion), this protein is Potassium channel toxin kappa-KTx 3.3.